Here is an 86-residue protein sequence, read N- to C-terminus: Protein GOLVEN 1 (86 aa).

Residues 1-29 form the signal peptide; the sequence is MSCSLRSGLVIVFCFILLLLSSNVGCASA. The propeptide occupies 30–70; that stretch reads ARRLRSHKHHHHKVASLDVFNGGERRRALGGVETGEEVVVM. The residue at position 72 (Tyr-72) is a Sulfotyrosine. Pro-80 bears the Hydroxyproline mark. Residues 84-86 constitute a propeptide that is removed on maturation; that stretch reads EKS.

It belongs to the RGF family. In terms of assembly, binds to LRR receptor-like serine/threonine-protein kinases to trigger their dimerization with SERK proteins and subsequent signaling. As to expression, expressed in stems, hypocotyls, cotyledons, leaves, flowers, shoot apex, siliques, stamens and petals.

The protein resides in the endoplasmic reticulum. Its subcellular location is the secreted. Signaling peptide (root growth factor) that regulates the pattern of root growth and lateral root development by modulating the length and the number of cortical cells in the root apical meristem (RAM), and the anticlinal asymmetric cell divisions in lateral root initiation cells. Also involved in the regulation of hypocotyl bending and root gravitropism in a PIN2-traffic dependent manner, thus influencing the formation of auxin gradients. Maintains the postembryonic root stem cell niche. This chain is Protein GOLVEN 1, found in Arabidopsis thaliana (Mouse-ear cress).